The following is a 212-amino-acid chain: uncharacterized protein (212 aa).

Gly-53, Glu-74, and Asp-97 together coordinate S-adenosyl-L-methionine.

Belongs to the methyltransferase superfamily. YrrT family.

Its function is as follows. Could be a S-adenosyl-L-methionine-dependent methyltransferase. This is an uncharacterized protein from Bacillus cereus (strain ATCC 10987 / NRS 248).